Consider the following 659-residue polypeptide: MGEFKIQSKFKPTGDQPKAIDTLVQSIENGNRGQTLLGVTGSGKTFTMANIIERTQKPTLILAHNKTLAAQLCAEFKEFFPDNIVEYFVSYYDYYQPEAYVPQTDTFIEKDASINDEIDKLRHSATSALLERRDVIIVASVSCIYGLGNPEEYKKLTISLRPGMIKDRDEVIKKLIEIQYERNDIDFARGTFRVRGDNLDIIPSSSSSKGIRIEFFGDEIDRIREFDVLTGNIIGERQHVSITPASHFAASEETLEKSIRVIEDELEDRLKVLTAEDKILEAQRLKQRTNYDIEMIREMGYCQGIENYSRILDGRMPGTPPQTLLDYFPEDFLMFIDESHVTLPQVRAMYAGDRSRKTSLVEFGFRLPCAFDNRPLKFSEFESKINQVVFVSATPGEYELDHSEIVAEQIIRPTGLLDPVIEIRPIQGQIDDLYGEIQRTVQRGFRVLITTLTKRMAEDLTKYLKDLNVKATYMHSDIDTLERMKIIRELRLGEVDVLIGINLLREGLDIPEVALVAILDADKEGFLRSETSLIQTIGRAARNSESKVIMYADNITKSMDKSIKETERRRVIQMEYNEEHNITPTTVIKGVRDIIEATKVSEEKENYESEVKKAAKKDIPVEKLIEQYEEEMKEAAKNLQFERAAELRDIIKDLKENSK.

Positions 25–412 constitute a Helicase ATP-binding domain; it reads QSIENGNRGQ…SEIVAEQIIR (388 aa). Residue 38–45 coordinates ATP; it reads GVTGSGKT. The Beta-hairpin motif lies at 91–114; sequence YYDYYQPEAYVPQTDTFIEKDASI. In terms of domain architecture, Helicase C-terminal spans 429-582; it reads QIDDLYGEIQ…QMEYNEEHNI (154 aa). The 36-residue stretch at 622 to 657 folds into the UVR domain; it reads EKLIEQYEEEMKEAAKNLQFERAAELRDIIKDLKEN.

This sequence belongs to the UvrB family. In terms of assembly, forms a heterotetramer with UvrA during the search for lesions. Interacts with UvrC in an incision complex.

Its subcellular location is the cytoplasm. The UvrABC repair system catalyzes the recognition and processing of DNA lesions. A damage recognition complex composed of 2 UvrA and 2 UvrB subunits scans DNA for abnormalities. Upon binding of the UvrA(2)B(2) complex to a putative damaged site, the DNA wraps around one UvrB monomer. DNA wrap is dependent on ATP binding by UvrB and probably causes local melting of the DNA helix, facilitating insertion of UvrB beta-hairpin between the DNA strands. Then UvrB probes one DNA strand for the presence of a lesion. If a lesion is found the UvrA subunits dissociate and the UvrB-DNA preincision complex is formed. This complex is subsequently bound by UvrC and the second UvrB is released. If no lesion is found, the DNA wraps around the other UvrB subunit that will check the other stand for damage. The chain is UvrABC system protein B from Clostridium perfringens (strain 13 / Type A).